The primary structure comprises 955 residues: 2-oxoglutarate dehydrogenase E1 component (955 aa).

It belongs to the alpha-ketoglutarate dehydrogenase family. Homodimer. Part of the 2-oxoglutarate dehydrogenase (OGDH) complex composed of E1 (2-oxoglutarate dehydrogenase), E2 (dihydrolipoamide succinyltransferase) and E3 (dihydrolipoamide dehydrogenase); the complex contains multiple copies of the three enzymatic components (E1, E2 and E3). It depends on thiamine diphosphate as a cofactor.

It carries out the reaction N(6)-[(R)-lipoyl]-L-lysyl-[protein] + 2-oxoglutarate + H(+) = N(6)-[(R)-S(8)-succinyldihydrolipoyl]-L-lysyl-[protein] + CO2. Functionally, E1 component of the 2-oxoglutarate dehydrogenase (OGDH) complex which catalyzes the decarboxylation of 2-oxoglutarate, the first step in the conversion of 2-oxoglutarate to succinyl-CoA and CO(2). The protein is 2-oxoglutarate dehydrogenase E1 component of Bacillus anthracis (strain A0248).